We begin with the raw amino-acid sequence, 343 residues long: Glucokinase (343 aa).

Position 18-23 (18-23) interacts with ATP; the sequence is GDIGGT.

Belongs to the bacterial glucokinase family.

It localises to the cytoplasm. The enzyme catalyses D-glucose + ATP = D-glucose 6-phosphate + ADP + H(+). The polypeptide is Glucokinase (Brucella melitensis biotype 1 (strain ATCC 23456 / CCUG 17765 / NCTC 10094 / 16M)).